The chain runs to 274 residues: Large ribosomal subunit protein uL2cz/uL2cy (274 aa).

Disordered stretches follow at residues 1-21 (MAIH…VDSQ) and 225-254 (PVDH…PALG).

Belongs to the universal ribosomal protein uL2 family. Part of the 50S ribosomal subunit.

Its subcellular location is the plastid. The protein localises to the chloroplast. In Draba nemorosa (Woodland whitlowgrass), this protein is Large ribosomal subunit protein uL2cz/uL2cy (rpl2-A).